The primary structure comprises 140 residues: Large ribosomal subunit protein uL13 (140 aa).

The protein belongs to the universal ribosomal protein uL13 family. As to quaternary structure, part of the 50S ribosomal subunit.

In terms of biological role, this protein is one of the early assembly proteins of the 50S ribosomal subunit, although it is not seen to bind rRNA by itself. It is important during the early stages of 50S assembly. The sequence is that of Large ribosomal subunit protein uL13 from Methanosarcina mazei (strain ATCC BAA-159 / DSM 3647 / Goe1 / Go1 / JCM 11833 / OCM 88) (Methanosarcina frisia).